The following is a 179-amino-acid chain: Phospholipase A2 (179 aa).

Positions 1 to 21 (MHALRSSVLALWLCLHVSVRA) are cleaved as a signal peptide. Residues 22–39 (WMTYRSANGLDEYEPEDR) constitute a propeptide that is removed on maturation. Ca(2+)-binding residues include tryptophan 47, glycine 49, and glycine 51. 5 disulfides stabilise this stretch: cysteine 48–cysteine 70, cysteine 69–cysteine 109, cysteine 76–cysteine 102, cysteine 100–cysteine 133, and cysteine 142–cysteine 150. The active site involves histidine 73. Ca(2+) is bound at residue aspartate 74. Residue aspartate 103 is part of the active site. Asparagine 112 carries an N-linked (GlcNAc...) asparagine glycan.

It depends on Ca(2+) as a cofactor. Expressed by the venom gland.

Its subcellular location is the secreted. It catalyses the reaction a 1,2-diacyl-sn-glycero-3-phosphocholine + H2O = a 1-acyl-sn-glycero-3-phosphocholine + a fatty acid + H(+). PLA2 catalyzes the calcium-dependent hydrolysis of the 2-acyl groups in 3-sn-phosphoglycerides. In Xylocopa appendiculata circumvolans (Japanese carpenter bee), this protein is Phospholipase A2.